The sequence spans 185 residues: Putative 3-methyladenine DNA glycosylase (185 aa).

It belongs to the DNA glycosylase MPG family.

In Rhizobium meliloti (strain 1021) (Ensifer meliloti), this protein is Putative 3-methyladenine DNA glycosylase.